We begin with the raw amino-acid sequence, 859 residues long: DNA mismatch repair protein MutS (859 aa).

612–619 (GPNMGGKS) is a binding site for ATP. The interval 797–822 (SKPLAPSATPPSSYAAPSPAAAPAQA) is disordered.

Belongs to the DNA mismatch repair MutS family.

Its function is as follows. This protein is involved in the repair of mismatches in DNA. It is possible that it carries out the mismatch recognition step. This protein has a weak ATPase activity. The chain is DNA mismatch repair protein MutS from Alcanivorax borkumensis (strain ATCC 700651 / DSM 11573 / NCIMB 13689 / SK2).